A 239-amino-acid polypeptide reads, in one-letter code: Ion-translocating oxidoreductase complex subunit E (239 aa).

A run of 5 helical transmembrane segments spans residues 41-61, 71-91, 95-115, 130-150, and 184-204; these read LGLGLATLLVLVCSNAAVSLV, LPAFVMIIAALTTCIELLMQA, ELYQILGIFIPLITTNCVILG, SFDGLLTGLGFALVLLVLGGL, and GFLLAILPPGAFIMLGLLIAL.

It belongs to the NqrDE/RnfAE family. In terms of assembly, the complex is composed of six subunits: RnfA, RnfB, RnfC, RnfD, RnfE and RnfG.

Its subcellular location is the cell inner membrane. In terms of biological role, part of a membrane-bound complex that couples electron transfer with translocation of ions across the membrane. The protein is Ion-translocating oxidoreductase complex subunit E of Pseudomonas paraeruginosa (strain DSM 24068 / PA7) (Pseudomonas aeruginosa (strain PA7)).